A 362-amino-acid chain; its full sequence is Protein ABHD12B (362 aa).

The protein belongs to the serine esterase family.

In Homo sapiens (Human), this protein is Protein ABHD12B.